The sequence spans 2771 residues: MDVKERKPYRSLTRRRDAERRYTSSSADSEEGKGPQKSYSSSETLKAYDQDARLAYGSRVKDMVPQEAEEFCRTGTNFTLRELGLGEMTPPHGTLYRTDIGLPHCGYSMGASSDADLEADTVLSPEHPVRLWGRSTRSGRSSCLSSRANSNLTLTDTEHENTETDHPSSLQNHPRLRTPPPPLPHAHTPNQHHAASINSLNRGNFTPRSNPSPAPTDHSLSGEPPAGSAQEPTHAQDNWLLNSNIPLETRNLGKQPFLGTLQDNLIEMDILSASRHDGAYSDGHFLFKPGGTSPLFCTTSPGYPLTSSTVYSPPPRPLPRSTFSRPAFNLKKPSKYCNWKCAALSAILISATLVILLAYFVAMHLFGLNWHLQPMEGQMQMYEITEDTASSWPVPTDVSLYPSGGTGLETPDRKGKGAAEGKPSSLFPEDSFIDSGEIDVGRRASQKIPPGTFWRSQVFIDHPVHLKFNVSLGKAALVGIYGRKGLPPSHTQFDFVELLDGRRLLTQEARSLEGPQRQSRGPVPPSSHETGFIQYLDSGIWHLAFYNDGKESEVVSFLTTAIESVDNCPSNCYGNGDCISGTCHCFLGFLGPDCGRASCPVLCSGNGQYMKGRCLCHSGWKGAECDVPTNQCIDVACSSHGTCIMGTCICNPGYKGESCEEVDCMDPTCSSRGVCVRGECHCSVGWGGTNCETPRATCLDQCSGHGTFLPDTGLCNCDPSWTGHDCSIEICAADCGGHGVCVGGTCRCEDGWMGAACDQRACHPRCAEHGTCRDGKCECSPGWNGEHCTIAHYLDRVVKEGCPGLCNGNGRCTLDLNGWHCVCQLGWRGTGCDTSMETGCGDGKDNDGDGLVDCMDPDCCLQPLCHVNPLCLGSPDPLDIIQETQAPVSQQNLNSFYDRIKFLVGRDSTHSIPGENPFDGGHACVIRGQVMTSDGTPLVGVNISFINNPLFGYTISRQDGSFDLVTNGGISIILRFERAPFITQEHTLWLPWDRFFVMETIVMRHEENEIPSCDLSNFARPNPVVSPSPLTSFASSCAEKGPIVPEIQALQEEIVIAGCKMRLSYLSSRTPGYKSVLRISLTHPTIPFNLMKVHLMVAVEGRLFRKWFAAAPDLSYYFIWDKTDVYNQKVFGLSEAFVSVGYEYESCPDLILWEKRTAVLQGYEIDASKLGGWSLDKHHALNIQSGILHKGNGENQFVSQQPPVIGSIMGNGRRRSISCPSCNGLADGNKLLAPVALTCGSDGSLYVGDFNYIRRIFPSGNVTNILEMRNKDFRHSHSPAHKYYLATDPMSGAVFLSDTNSRRVFKVKSTTVVKDLVKNSEVVAGTGDQCLPFDDTRCGDGGKATEATLTNPRGITVDKFGLIYFVDGTMIRRVDQNGIISTLLGSNDLTSARPLSCDSVMEISQVRLEWPTDLAINPMDNSLYVLDNNVVLQISENHQVRIVAGRPMHCQVPGIDHFLLSKVAIHATLESATALAVSHNGVLYIAETDEKKINRIRQVTTSGEISLVAGAPSGCDCKNDANCDCFSGDDGYAKDAKLNTPSSLAVCADGELYVADLGNIRIRFIRKNKPFLNTQNMYELSSPIDQELYLFDTSGKHLYTQSLPTGDYLYNFTYTGDGDITHITDNNGNMVNVRRDSTGMPLWLVVPDGQVYWVTMGTNSALRSVTTQGHELAMMTYHGNSGLLATKSNENGWTTFYEYDSFGRLTNVTFPTGQVSSFRSDTDSSVHVQVETSSKDDVTITTNLSASGAFYTLLQDQVRNSYYIGADGSLRLLLANGMEVALQTEPHLLAGTVNPTVGKRNVTLPIDNGLNLVEWRQRKEQARGQVTVFGRRLRVHNRNLLSLDFDRVTRTEKIYDDHRKFTLRILYDQAGRPSLWSPSSRLNGVNVTYSPGGHIAGIQRGIMSERMEYDQAGRITSRIFADGKMWSYTYLEKSMVLHLHSQRQYIFEFDKNDRLSSVTMPNVARQTLETIRSVGYYRNIYQPPEGNASVIQDFTEDGHLLHTFYLGTGRRVIYKYGKLSKLAETLYDTTKVSFTYDETAGMLKTVNLQNEGFTCTIRYRQIGPLIDRQIFRFTEEGMVNARFDYNYDNSFRVTSMQAVINETPLPIDLYRYDDVSGKTEQFGKFGVIYYDINQIITTAVMTHTKHFDAYGRMKEVQYEIFRSLMYWMTVQYDNMGRVVKKELKVGPYANTTRYSYEYDADGQLQTVSINDKPLWRYSYDLNGNLHLLSPGNSARLTPLRYDLRDRITRLGDVQYKMDEDGFLRQRGGDVFEYNSAGLLIKAYNRASGWSVRYRYDGLGRRVSSKSSHSHHLQFFYADLTNPTKVTHLYNHSSSEITSLYYDLQGHLFAMELSSGDEFYIACDNIGTPLAVFSGTGLMIKQILYTAYGEIYMDTNPNFQIIIGYHGGLYDPLTKLVHMGRRDYDVLAGRWTSPDHELWKRLSSNSIVPFHLYMFKNNNPISNSQDIKCFMTDVNSWLLTFGFQLHNVIPGYPKPDTDAMEPSYELVHTQMKTQEWDNSKSILGVQCEVQKQLKAFVTLERFDQLYGSTITSCQQAPETKKFASSGSIFGKGVKFALKDGRVTTDIISVANEDGRRIAAILNNAHYLENLHFTIDGVDTHYFVKPGPSEGDLAILGLSGGRRTLENGVNVTVSQINTVLSGRTRRYTDIQLQYRALCLNTRYGTTVDEEKVRVLELARQRAVRQAWAREQQRLREGEEGLRAWTDGEKQQVLNTGRVQGYDGFFVTSVEQYPELSDSANNIHFMRQSEMGRR.

Over residues 1–22 the composition is skewed to basic and acidic residues; sequence MDVKERKPYRSLTRRRDAERRY. Residues 1–45 are disordered; sequence MDVKERKPYRSLTRRRDAERRYTSSSADSEEGKGPQKSYSSSETL. The region spanning 1 to 341 is the Teneurin N-terminal domain; that stretch reads MDVKERKPYR…KPSKYCNWKC (341 aa). At 1 to 345 the chain is on the cytoplasmic side; it reads MDVKERKPYR…YCNWKCAALS (345 aa). Ser124 bears the Phosphoserine mark. The segment at 132-233 is disordered; that stretch reads WGRSTRSGRS…PPAGSAQEPT (102 aa). A compositionally biased stretch (low complexity) spans 134-155; it reads RSTRSGRSSCLSSRANSNLTLT. Positions 156-166 are enriched in basic and acidic residues; that stretch reads DTEHENTETDH. A Phosphothreonine modification is found at Thr178. The segment covering 191–211 has biased composition (polar residues); sequence QHHAASINSLNRGNFTPRSNP. The chain crosses the membrane as a helical span at residues 346–366; that stretch reads AILISATLVILLAYFVAMHLF. Over 367-2771 the chain is Extracellular; sequence GLNWHLQPME…FMRQSEMGRR (2405 aa). The interval 403-428 is disordered; it reads SGGTGLETPDRKGKGAAEGKPSSLFP. The segment covering 410–419 has biased composition (basic and acidic residues); it reads TPDRKGKGAA. Asn469 carries N-linked (GlcNAc...) asparagine glycosylation. The tract at residues 509–528 is disordered; the sequence is ARSLEGPQRQSRGPVPPSSH. 8 EGF-like domains span residues 564–595, 596–626, 628–660, 661–692, 694–727, 728–759, 760–789, and 790–833; these read SVDN…PDCG, RASC…AECD, PTNQ…ESCE, EVDC…TNCE, PRAT…HDCS, IEIC…ACDQ, RACH…EHCT, and IAHY…TGCD. 22 disulfides stabilise this stretch: Cys568–Cys578, Cys572–Cys583, Cys585–Cys594, Cys603–Cys614, Cys616–Cys625, Cys632–Cys643, Cys637–Cys648, Cys650–Cys659, Cys664–Cys675, Cys669–Cys680, Cys682–Cys691, Cys702–Cys715, Cys717–Cys726, Cys731–Cys741, Cys735–Cys746, Cys748–Cys757, Cys762–Cys772, Cys766–Cys777, Cys779–Cys788, Cys802–Cys812, Cys806–Cys821, and Cys823–Cys832. N-linked (GlcNAc...) asparagine glycans are attached at residues Asn942 and Asn1261. 5 NHL repeats span residues 1218-1261, 1266-1310, 1336-1380, 1395-1446, and 1525-1568; these read SCPS…PSGN, LEMR…VKST, TRCG…NGII, LSCD…VAGR, and CFSG…IRKN. The stretch at 1578–1597 is one YD 1 repeat; the sequence is YELSSPIDQELYLFDTSGKH. An N-linked (GlcNAc...) asparagine glycan is attached at Asn1611. YD repeat units follow at residues 1614 to 1634, 1677 to 1696, and 1697 to 1719; these read YTGD…VNVR, YHGN…WTTF, and YEYD…SSFR. Residues Asn1707, Asn1743, Asn1801, and Asn1886 are each glycosylated (N-linked (GlcNAc...) asparagine). 18 YD repeats span residues 1889 to 1908, 1930 to 1948, 1949 to 1969, 1976 to 1993, 1994 to 2015, 2016 to 2033, 2036 to 2056, 2059 to 2079, 2087 to 2106, 2112 to 2129, 2130 to 2156, 2158 to 2171, 2172 to 2195, 2198 to 2218, 2219 to 2239, 2241 to 2261, 2273 to 2293, and 2295 to 2315; these read YSPG…ERME, YLEK…YIFE, FDKN…QTLE, YYRN…VIQD, FTED…VIYK, YGKL…TKVS, YDET…FTCT, YRQI…EGMV, YDNS…TPLP, YDDV…GVIY, YDIN…MKEV, YEIF…MTVQ, YDNM…TRYS, YDAD…WRYS, YDLN…LTPL, YDLR…DEDG, YNSA…SVRY, and YDGL…LQFF. A glycan (N-linked (GlcNAc...) asparagine) is linked at Asn1987. N-linked (GlcNAc...) asparagine glycosylation is present at Asn2190. Asn2330 is a glycosylation site (N-linked (GlcNAc...) asparagine). A YD 23 repeat occupies 2341-2382; it reads YDLQGHLFAMELSSGDEFYIACDNIGTPLAVFSGTGLMIKQI. Asn2648 is a glycosylation site (N-linked (GlcNAc...) asparagine).

It belongs to the tenascin family. Teneurin subfamily. Homodimer; disulfide-linked. May also form heterodimer with either TENM1 or TENM2 or TENM3. In terms of tissue distribution, expressed in brain and spinal cord (at protein level). Expressed in neurons and oligodendrocytes of the spinal cord. Expressed weakly in kidney, lung and spleen. Expressed in the cortex, CA1, CA2 and CA3 of the hippocampus. Expressed in the white matter, Purkinje cells and molecular layer of the cerebellum.

It is found in the cell membrane. The protein localises to the cell projection. Its subcellular location is the nucleus. It localises to the cytoplasm. Its function is as follows. Involved in neural development, regulating the establishment of proper connectivity within the nervous system. Plays a role in the establishment of the anterior-posterior axis during gastrulation. Regulates the differentiation and cellular process formation of oligodendrocytes and myelination of small-diameter axons in the central nervous system (CNS). Promotes activation of focal adhesion kinase. May function as a cellular signal transducer. The chain is Teneurin-4 (Tenm4) from Mus musculus (Mouse).